The primary structure comprises 914 residues: Eukaryotic translation initiation factor 3 subunit C-like protein (914 aa).

A disordered region spans residues 1 to 44 (MSRFFTTGSDSESESSLSGEELVTKPVGGNYGKQPLLLSEDEED). Over residues 8 to 21 (GSDSESESSLSGEE) the composition is skewed to low complexity. S9, S11, S13, S15, S16, S18, and S39 each carry phosphoserine. K99 carries the N6-acetyllysine modification. 2 disordered regions span residues 157–302 (TSYK…GGEW) and 523–543 (QLTPPEGSSKSEQDQAENEGE). 4 positions are modified to phosphoserine: S166, S178, S181, and S182. Acidic residues predominate over residues 166–190 (SADEDAEKNEEDSEGSSDEDEDEDG). Basic and acidic residues predominate over residues 199-216 (KKSEAPSGESRKFLKKMD). A compositionally biased stretch (acidic residues) spans 217-232 (DEDEDSEDSEDDEDWD). Basic and acidic residues predominate over residues 261–278 (PTTDEDKKAAEKKREDKA). Over residues 291–300 (EEEEEDNEGG) the composition is skewed to acidic residues. The span at 523 to 532 (QLTPPEGSSK) shows a compositional bias: polar residues. The residue at position 525 (T525) is a Phosphothreonine. K644 is modified (N6-acetyllysine). The region spanning 674-850 (FHLHINLELL…QTVVMHRTEP (177 aa)) is the PCI domain. Residues 886–914 (FRDQKDGYRKNEGYMRRGGYRQQQSQTAY) form a disordered region. The span at 887–900 (RDQKDGYRKNEGYM) shows a compositional bias: basic and acidic residues. S910 carries the phosphoserine modification.

It belongs to the eIF-3 subunit C family. In terms of assembly, component of the eukaryotic translation initiation factor 3 (eIF-3) complex, which is composed of 13 subunits: EIF3A, EIF3B, EIF3C, EIF3D, EIF3E, EIF3F, EIF3G, EIF3H, EIF3I, EIF3J, EIF3K, EIF3L and EIF3M. The eIF-3 complex appears to include 3 stable modules: module A is composed of EIF3A, EIF3B, EIF3G and EIF3I; module B is composed of EIF3F, EIF3H, and EIF3M; and module C is composed of EIF3C, EIF3D, EIF3E, EIF3K and EIF3L. EIF3C of module C binds EIF3B of module A and EIF3H of module B, thereby linking the three modules. EIF3J is a labile subunit that binds to the eIF-3 complex via EIF3B. The eIF-3 complex interacts with RPS6KB1 under conditions of nutrient depletion. Mitogenic stimulation leads to binding and activation of a complex composed of MTOR and RPTOR, leading to phosphorylation and release of RPS6KB1 and binding of EIF4B to eIF-3. In terms of processing, phosphorylated. Phosphorylation is enhanced upon serum stimulation.

The protein localises to the cytoplasm. Component of the eukaryotic translation initiation factor 3 (eIF-3) complex, which is required for several steps in the initiation of protein synthesis. The eIF-3 complex associates with the 40S ribosome and facilitates the recruitment of eIF-1, eIF-1A, eIF-2:GTP:methionyl-tRNAi and eIF-5 to form the 43S pre-initiation complex (43S PIC). The eIF-3 complex stimulates mRNA recruitment to the 43S PIC and scanning of the mRNA for AUG recognition. The eIF-3 complex is also required for disassembly and recycling of post-termination ribosomal complexes and subsequently prevents premature joining of the 40S and 60S ribosomal subunits prior to initiation. The eIF-3 complex specifically targets and initiates translation of a subset of mRNAs involved in cell proliferation, including cell cycling, differentiation and apoptosis, and uses different modes of RNA stem-loop binding to exert either translational activation or repression. The chain is Eukaryotic translation initiation factor 3 subunit C-like protein (EIF3CL) from Homo sapiens (Human).